The chain runs to 402 residues: Serine/threonine transporter SstT (402 aa).

A run of 9 helical transmembrane segments spans residues 19–39, 43–63, 86–106, 138–158, 179–199, 212–232, 287–307, 327–347, and 354–374; these read IGVV…AIGL, LFVG…VISA, TFAA…TLIL, AITE…GLAM, VVKW…FTSI, LLIL…NPII, IPLG…ILTL, VVAA…LLLI, and FGIS…VGVI.

The protein belongs to the dicarboxylate/amino acid:cation symporter (DAACS) (TC 2.A.23) family.

It localises to the cell membrane. The catalysed reaction is L-serine(in) + Na(+)(in) = L-serine(out) + Na(+)(out). It catalyses the reaction L-threonine(in) + Na(+)(in) = L-threonine(out) + Na(+)(out). Functionally, involved in the import of serine and threonine into the cell, with the concomitant import of sodium (symport system). This is Serine/threonine transporter SstT from Streptococcus agalactiae serotype III (strain NEM316).